A 179-amino-acid polypeptide reads, in one-letter code: Mediator of RNA polymerase II transcription subunit 28 (179 aa).

Positions 1–43 (MASSMCGMFPGQQPPGSLPPPGPGGPGQPGLLTGTPGNRGANN) are disordered. Residues 12 to 26 (QQPPGSLPPPGPGGP) are compositionally biased toward pro residues. A coiled-coil region spans residues 109–139 (EQVEKEDASELKNELQRKEMLIQKHLAKIHH).

The protein belongs to the Mediator complex subunit 28 family. As to quaternary structure, component of the Mediator complex.

The protein localises to the nucleus. In terms of biological role, component of the Mediator complex, a coactivator involved in the regulated transcription of nearly all RNA polymerase II-dependent genes. Mediator functions as a bridge to convey information from gene-specific regulatory proteins to the basal RNA polymerase II transcription machinery. Mediator is recruited to promoters by direct interactions with regulatory proteins and serves as a scaffold for the assembly of a functional preinitiation complex with RNA polymerase II and the general transcription factors. This chain is Mediator of RNA polymerase II transcription subunit 28 (med28), found in Danio rerio (Zebrafish).